A 145-amino-acid polypeptide reads, in one-letter code: RNAP inhibitory protein (145 aa).

Residues 110–123 (HIKKLNLNSLAMLS) form a C-terminal tail, binds in the RNAP DNA-binding channel region.

The protein belongs to the viral ORF131/RIP family. As to quaternary structure, interacts with host RNA polymerase (RNAP) subunits Rpo1N and Rpo2.

It localises to the virion. Functionally, plays a role in the inhibition of global transcription by interacting with the RNA polymerase (RNAP) clamp, locking it in a fixed position and inhibiting the formation and/or stability of the pre-initiation complex (PIC). Also overlaps with the transcription factor B binding site; overall RIP probably interferes with DNA loading onto RNAP but does not displace DNA once it is loaded. May play a role in virus particle assembly, possibly by dissociating active RNAP from the virus genome. The sequence is that of RNAP inhibitory protein from Acidianus two-tailed virus (ATV).